The chain runs to 182 residues: Ribosome maturation factor RimM (182 aa).

One can recognise a PRC barrel domain in the interval 106–179 (EGEFHVLDLI…RIEITPPPGL (74 aa)).

This sequence belongs to the RimM family. As to quaternary structure, binds ribosomal protein uS19.

The protein resides in the cytoplasm. Functionally, an accessory protein needed during the final step in the assembly of 30S ribosomal subunit, possibly for assembly of the head region. Essential for efficient processing of 16S rRNA. May be needed both before and after RbfA during the maturation of 16S rRNA. It has affinity for free ribosomal 30S subunits but not for 70S ribosomes. The protein is Ribosome maturation factor RimM of Synechococcus elongatus (strain ATCC 33912 / PCC 7942 / FACHB-805) (Anacystis nidulans R2).